Reading from the N-terminus, the 348-residue chain is Delta(6)-protoilludene synthase 18 (348 aa).

4 residues coordinate Mg(2+): Asp87, Asn223, Ser227, and Glu231. Positions 87 to 91 match the DDXXD motif motif; it reads DEYTD. An NSE/DTE motif motif is present at residues 223–231; the sequence is NDLVSYNRE. (2E,6E)-farnesyl diphosphate is bound by residues Arg311 and Tyr312.

This sequence belongs to the terpene synthase family. Mg(2+) serves as cofactor.

It carries out the reaction (2E,6E)-farnesyl diphosphate = Delta(6)-protoilludene + diphosphate. Functionally, terpene cyclase that catalyzes the cyclization of farnesyl diphosphate (FPP) to delta(6)-protoilludene. This chain is Delta(6)-protoilludene synthase 18, found in Postia placenta (strain ATCC 44394 / Madison 698-R) (Brown rot fungus).